Consider the following 466-residue polypeptide: MTAPVVTRFAPSPTGFLHIGGARTALFNWLYARGRGGKFLLRIEDTDRARSTPEATQAILDGMAWLGLDHDGDIVSQFDNAARHAAVAMELLAAGKAYKCFATQEEISAFREAARADGRSTLYRSPWRDAAQEAHPDAPFVIRIKAPQEGETIIRDQVQGDVTIRNDQLDDMVLLRSDGTPVYMLAVVVDDHDMGVTHVIRGDDHLNNAARQMMIYNALGWDVPVWAHIPLIHGPDGKKLSKRHGALGAQEYQVMGYPAAGMRNYLARLGWSHGDDEFFTDAQAREWFDLDGIGKSPARFDTKKLENLCGQHIAASQDAALRQEAEAFRAVSGQPALTASQSHMLGKAMYCIKERAKTFPELIDKAHFALTQRPVTPDAKAAKSLDNVSRGILKELTPQLQNASWERENLEAILNAFAHSKDTKFGKLAGPLRAALAGRSVTPSVFDMMLVLGPEETCARLNDAAV.

Residues P11–G21 carry the 'HIGH' region motif. The 'KMSKS' region motif lies at K239–R243. K242 lines the ATP pocket.

Belongs to the class-I aminoacyl-tRNA synthetase family. Glutamate--tRNA ligase type 1 subfamily. In terms of assembly, monomer.

It is found in the cytoplasm. It catalyses the reaction tRNA(Glu) + L-glutamate + ATP = L-glutamyl-tRNA(Glu) + AMP + diphosphate. Its function is as follows. Catalyzes the attachment of glutamate to tRNA(Glu) in a two-step reaction: glutamate is first activated by ATP to form Glu-AMP and then transferred to the acceptor end of tRNA(Glu). In Roseobacter denitrificans (strain ATCC 33942 / OCh 114) (Erythrobacter sp. (strain OCh 114)), this protein is Glutamate--tRNA ligase 2.